The sequence spans 412 residues: Tryptophan synthase beta chain (412 aa).

An N6-(pyridoxal phosphate)lysine modification is found at lysine 105.

The protein belongs to the TrpB family. As to quaternary structure, tetramer of two alpha and two beta chains. It depends on pyridoxal 5'-phosphate as a cofactor.

The enzyme catalyses (1S,2R)-1-C-(indol-3-yl)glycerol 3-phosphate + L-serine = D-glyceraldehyde 3-phosphate + L-tryptophan + H2O. The protein operates within amino-acid biosynthesis; L-tryptophan biosynthesis; L-tryptophan from chorismate: step 5/5. Its function is as follows. The beta subunit is responsible for the synthesis of L-tryptophan from indole and L-serine. The protein is Tryptophan synthase beta chain (trpB) of Synechocystis sp. (strain ATCC 27184 / PCC 6803 / Kazusa).